We begin with the raw amino-acid sequence, 169 residues long: ATP synthase subunit b (169 aa).

Residues 12–32 (HIYLGNAIWYLLCFAILMLLI) traverse the membrane as a helical segment.

The protein belongs to the ATPase B chain family. In terms of assembly, F-type ATPases have 2 components, F(1) - the catalytic core - and F(0) - the membrane proton channel. F(1) has five subunits: alpha(3), beta(3), gamma(1), delta(1), epsilon(1). F(0) has three main subunits: a(1), b(2) and c(10-14). The alpha and beta chains form an alternating ring which encloses part of the gamma chain. F(1) is attached to F(0) by a central stalk formed by the gamma and epsilon chains, while a peripheral stalk is formed by the delta and b chains.

The protein resides in the cell membrane. With respect to regulation, increases 2-fold following exposure to low pH. F(1)F(0) ATP synthase produces ATP from ADP in the presence of a proton or sodium gradient. F-type ATPases consist of two structural domains, F(1) containing the extramembraneous catalytic core and F(0) containing the membrane proton channel, linked together by a central stalk and a peripheral stalk. During catalysis, ATP synthesis in the catalytic domain of F(1) is coupled via a rotary mechanism of the central stalk subunits to proton translocation. In terms of biological role, component of the F(0) channel, it forms part of the peripheral stalk, linking F(1) to F(0). The sequence is that of ATP synthase subunit b from Lactobacillus acidophilus (strain ATCC 700396 / NCK56 / N2 / NCFM).